The chain runs to 98 residues: Post-transcriptional regulator ComN (98 aa).

In terms of assembly, interacts directly with DivIVA.

The protein localises to the cytoplasm. Its function is as follows. Required for post-transcription initiation control of the comE operon. Promotes the accumulation of its target comE mRNA to septal and polar sites. This Bacillus subtilis (strain 168) protein is Post-transcriptional regulator ComN (comN).